A 462-amino-acid chain; its full sequence is L-seryl-tRNA(Sec) selenium transferase (462 aa).

Lysine 294 is subject to N6-(pyridoxal phosphate)lysine.

This sequence belongs to the SelA family. As to quaternary structure, homodecamer; pentamer of dimers. Binds only one seryl-tRNA(Sec) per dimer. It depends on pyridoxal 5'-phosphate as a cofactor.

Its subcellular location is the cytoplasm. It carries out the reaction L-seryl-tRNA(Sec) + selenophosphate + H(+) = L-selenocysteinyl-tRNA(Sec) + phosphate. The protein operates within aminoacyl-tRNA biosynthesis; selenocysteinyl-tRNA(Sec) biosynthesis; selenocysteinyl-tRNA(Sec) from L-seryl-tRNA(Sec) (bacterial route): step 1/1. Converts seryl-tRNA(Sec) to selenocysteinyl-tRNA(Sec) required for selenoprotein biosynthesis. This Yersinia pestis bv. Antiqua (strain Antiqua) protein is L-seryl-tRNA(Sec) selenium transferase.